We begin with the raw amino-acid sequence, 259 residues long: Phosphate import ATP-binding protein PstB 1 (259 aa).

The ABC transporter domain maps to 13–254 (IQVRGLEFFY…PSKTQTEDYI (242 aa)). Residue 45-52 (GPSGCGKS) participates in ATP binding.

This sequence belongs to the ABC transporter superfamily. Phosphate importer (TC 3.A.1.7) family. The complex is composed of two ATP-binding proteins (PstB), two transmembrane proteins (PstC and PstA) and a solute-binding protein (PstS).

The protein resides in the cell inner membrane. The catalysed reaction is phosphate(out) + ATP + H2O = ADP + 2 phosphate(in) + H(+). Part of the ABC transporter complex PstSACB involved in phosphate import. Responsible for energy coupling to the transport system. This chain is Phosphate import ATP-binding protein PstB 1, found in Pseudomonas savastanoi pv. phaseolicola (strain 1448A / Race 6) (Pseudomonas syringae pv. phaseolicola (strain 1448A / Race 6)).